Here is a 368-residue protein sequence, read N- to C-terminus: Left-right determination factor 1 (368 aa).

The signal sequence occupies residues 1–21 (MPFLWLCWALWALSLVSLREA). The propeptide at 22 to 76 (LTGEQILGSLLQQLQLDQPPVLDKADVEGMVIPSHVRTQYVALLQHSHASRSRGK) is or 135. A glycan (N-linked (GlcNAc...) asparagine) is linked at asparagine 158. Cystine bridges form between cysteine 253/cysteine 266, cysteine 265/cysteine 318, cysteine 295/cysteine 353, and cysteine 299/cysteine 355.

The protein belongs to the TGF-beta family. The processing of the protein may also occur at the second R-X-X-R site located at AA 132-135. Processing appears to be regulated in a cell-type specific manner.

The protein localises to the secreted. Required for left-right axis determination as a regulator of LEFTY2 and NODAL. This Mus musculus (Mouse) protein is Left-right determination factor 1 (Lefty1).